The sequence spans 898 residues: Alanine--tRNA ligase (898 aa).

4 residues coordinate Zn(2+): His582, His586, Cys685, and His689.

This sequence belongs to the class-II aminoacyl-tRNA synthetase family. It depends on Zn(2+) as a cofactor.

Its subcellular location is the cytoplasm. The enzyme catalyses tRNA(Ala) + L-alanine + ATP = L-alanyl-tRNA(Ala) + AMP + diphosphate. Catalyzes the attachment of alanine to tRNA(Ala) in a two-step reaction: alanine is first activated by ATP to form Ala-AMP and then transferred to the acceptor end of tRNA(Ala). Also edits incorrectly charged Ser-tRNA(Ala) and Gly-tRNA(Ala) via its editing domain. In Mycolicibacterium vanbaalenii (strain DSM 7251 / JCM 13017 / BCRC 16820 / KCTC 9966 / NRRL B-24157 / PYR-1) (Mycobacterium vanbaalenii), this protein is Alanine--tRNA ligase.